Consider the following 602-residue polypeptide: MQQTQQGPKVQTQTLQGGAGNLNSIFQRSGRTDGGDARASEALAVFNKLKEEAIAQQDLHDDFLVFRFDRDQNRVGYSALLVVKRAAINGQQVIVTRPLVMPNDQITLPTKKLTIQNGMHQETIEAEADVQDVFTTQYWNRICDSIRQQTGKHDAMVINAGPTVIPADFDLKDELVLKQLLIKSVNLCDDMLAKRSGEQPFSVAMLKGTDETLAARLNFTGKPMHDSLGYPIRSDILVSLNRVKKPGQQENEFYEAEDKLNQVSCFVNLEYTPQPQQAIYGAPQQTQQLPPLTPAIVITDVRQAEWLKANTMELYLFALSNAFRVTANQSWARSLLPQLGKVKDMRDIGAIGYLSRLAARVETKTETFTDQNFAELLYNMVRPSPVFMSDLNRFGDNAAIENVFIDALGGVNQQRAVAAIIAGVNNLIGGGFEKFFDHNTMPIIQPYGTDIQLGYYLDGEGEKQDRRDLDVLGALNASDGNIQEWMSWYGTQCNVAVHPELRARQSKNFDRQYLGNSVTYTTRAHRGIWNPKFIEALDKAIASVGLTVAMDNVAQVFGAQRFSGNLAIADYAVTGTAQVSSGLVSNGGYNPQFGVGQGSGFY.

The segment covering 1-14 has biased composition (low complexity); that stretch reads MQQTQQGPKVQTQT. A disordered region spans residues 1–33; sequence MQQTQQGPKVQTQTLQGGAGNLNSIFQRSGRTD.

Belongs to the Phikzvirus chimallin family. In terms of assembly, homotetramer. The tetrameric protomers further assemble as a square grid.

Its subcellular location is the host cytoplasm. Its function is as follows. Self-assembles to form a proteinaceous shell that encloses the viral DNA and compartmentalizes proteins and DNA during viral infection. This micrometer-scale compartment contains narrow pores and is the site of viral replication, with the proteins involved in DNA replication localized inside. Provides a surface for docking of capsids during packaging. Probably protects the viral genome against host defenses. In Pseudomonas aeruginosa (Pseudomonas aeruginosa phage PhiPA3), this protein is Chimallin.